A 164-amino-acid polypeptide reads, in one-letter code: Peptidyl-prolyl cis-trans isomerase A-like 4G (164 aa).

Residues 7–163 form the PPIase cyclophilin-type domain; that stretch reads FFDITVDGKP…KKITIADCGQ (157 aa).

Belongs to the cyclophilin-type PPIase family. PPIase A subfamily.

The protein resides in the cytoplasm. The enzyme catalyses [protein]-peptidylproline (omega=180) = [protein]-peptidylproline (omega=0). In terms of biological role, PPIases accelerate the folding of proteins. It catalyzes the cis-trans isomerization of proline imidic peptide bonds in oligopeptides. The chain is Peptidyl-prolyl cis-trans isomerase A-like 4G (PPIAL4G) from Homo sapiens (Human).